The chain runs to 201 residues: Probable molybdenum cofactor guanylyltransferase (201 aa).

Residues 6 to 8 (LAG), Lys-18, Asp-67, and Asp-92 each bind GTP. A Mg(2+)-binding site is contributed by Asp-92.

Belongs to the MobA family. It depends on Mg(2+) as a cofactor.

Its subcellular location is the cytoplasm. It catalyses the reaction Mo-molybdopterin + GTP + H(+) = Mo-molybdopterin guanine dinucleotide + diphosphate. In terms of biological role, transfers a GMP moiety from GTP to Mo-molybdopterin (Mo-MPT) cofactor (Moco or molybdenum cofactor) to form Mo-molybdopterin guanine dinucleotide (Mo-MGD) cofactor. The sequence is that of Probable molybdenum cofactor guanylyltransferase from Thermococcus kodakarensis (strain ATCC BAA-918 / JCM 12380 / KOD1) (Pyrococcus kodakaraensis (strain KOD1)).